The primary structure comprises 292 residues: MERGPTVGAGLGAGTRVRALLGCLVKVLLWVASALLYFGSEQAARLLGSPCLRRLYHAWLAAVVIFGPLLQFHVNSRTIFASHGNFFNIKFVNSAWGWTCTFLGGFVLLVVFLATRRVAVTARHLSRLVVGAAVWRGAGRAFLLIEDLTGSCFEPLPQGLLLHELPDRKSCLAAGHQWRGYTVSSHTFLLTFCCLLMAEEAAVFAKYLAHGLPAGAPLRLVFLLNVLLLGLWNFLLLCTVIYFHQYTHKVVGAAVGTFAWYLTYGSWYHQPWSPGIPGHGLFPRSRSMRKHN.

Residues 1 to 18 are Lumenal-facing; it reads MERGPTVGAGLGAGTRVR. Residues 19-39 form a helical membrane-spanning segment; that stretch reads ALLGCLVKVLLWVASALLYFG. Residues 40–54 lie on the Cytoplasmic side of the membrane; sequence SEQAARLLGSPCLRR. A helical membrane pass occupies residues 55 to 75; that stretch reads LYHAWLAAVVIFGPLLQFHVN. Topologically, residues 76–94 are lumenal; it reads SRTIFASHGNFFNIKFVNS. A helical transmembrane segment spans residues 95-115; the sequence is AWGWTCTFLGGFVLLVVFLAT. The Cytoplasmic portion of the chain corresponds to 116-141; sequence RRVAVTARHLSRLVVGAAVWRGAGRA. A helical transmembrane segment spans residues 142–162; that stretch reads FLLIEDLTGSCFEPLPQGLLL. Residues 163 to 187 lie on the Lumenal side of the membrane; the sequence is HELPDRKSCLAAGHQWRGYTVSSHT. His186 is a catalytic residue. The chain crosses the membrane as a helical span at residues 188–208; sequence FLLTFCCLLMAEEAAVFAKYL. Topologically, residues 209–220 are cytoplasmic; sequence AHGLPAGAPLRL. A helical membrane pass occupies residues 221 to 241; the sequence is VFLLNVLLLGLWNFLLLCTVI. At 242–249 the chain is on the lumenal side; that stretch reads YFHQYTHK. Residue His244 is part of the active site. Residues 250 to 270 traverse the membrane as a helical segment; the sequence is VVGAAVGTFAWYLTYGSWYHQ. The Cytoplasmic portion of the chain corresponds to 271 to 292; that stretch reads PWSPGIPGHGLFPRSRSMRKHN.

This sequence belongs to the FIT family. FIT1 subfamily. As to expression, predominantly expressed in skeletal muscle and at lower levels in the heart (at protein level). In the heart, mRNA expression levels do not correlate well with protein levels, suggesting post-transcriptional regulation in this organ.

The protein resides in the endoplasmic reticulum membrane. Its function is as follows. Plays an important role in the formation of lipid droplets (LDs) which are storage organelles at the center of lipid and energy homeostasis. Directly binds to diacylglycerol (DAGs) and triacylglycerol. The polypeptide is Fat storage-inducing transmembrane protein 1 (Mus musculus (Mouse)).